Here is a 383-residue protein sequence, read N- to C-terminus: Probable butyrate kinase (383 aa).

The protein belongs to the acetokinase family.

It is found in the cytoplasm. The enzyme catalyses butanoate + ATP = butanoyl phosphate + ADP. This chain is Probable butyrate kinase, found in Deinococcus radiodurans (strain ATCC 13939 / DSM 20539 / JCM 16871 / CCUG 27074 / LMG 4051 / NBRC 15346 / NCIMB 9279 / VKM B-1422 / R1).